Consider the following 290-residue polypeptide: MPTLKDIRVRIKGVKSTQQVTKAMKMVAAAKLRKAQERAVMARPYAAKLKEMLGSLSGKVDTSASPLLADRADASRVLVVLITSDRGLCGAFNTNIIKLAHRTIHEEYAAAYAAGNVQLICAGTRGFDFFRKRGYSVLKGYPAVFQNLDFSTAREIAETASSMYVKGEVDRVVVVYNEFKSVLAPTLKAEVLLPIKSELPVAEGGDYIYEPSPAAIIEELVPKHLNTQVWGMMLESNAAEQAARMTAMDSATENAKELLRGLNISYNRARQAAITKELSEIVGGADALQN.

The protein belongs to the ATPase gamma chain family. In terms of assembly, F-type ATPases have 2 components, CF(1) - the catalytic core - and CF(0) - the membrane proton channel. CF(1) has five subunits: alpha(3), beta(3), gamma(1), delta(1), epsilon(1). CF(0) has three main subunits: a, b and c.

The protein resides in the cell inner membrane. Functionally, produces ATP from ADP in the presence of a proton gradient across the membrane. The gamma chain is believed to be important in regulating ATPase activity and the flow of protons through the CF(0) complex. This chain is ATP synthase gamma chain, found in Chlorobium luteolum (strain DSM 273 / BCRC 81028 / 2530) (Pelodictyon luteolum).